A 288-amino-acid chain; its full sequence is Proline iminopeptidase (288 aa).

Residues 27-274 form the AB hydrolase-1 domain; the sequence is PVIVLHGGPG…SAHMPYIEEP (248 aa). The active-site Nucleophile is serine 101. Aspartate 240 is a catalytic residue. Histidine 267 acts as the Proton donor in catalysis.

Belongs to the peptidase S33 family. In terms of assembly, monomer.

The protein localises to the cytoplasm. The catalysed reaction is Release of N-terminal proline from a peptide.. Completely inhibited by p-chloromercuribenzoate (PCMB) and heavy metal salts. Partially inhibited by proline and proline derivatives with proline as the amino terminus. Enzyme inactivated by PCMB is reactivated by incubation with 2-mercaptoethanol. Functionally, releases the N-terminal proline from various substrates including at least dipeptides Pro-Pro, Pro-Gln, Pro-Trp and Pro-Tyr. Also acts on amides (Pro-beta NA) and oligopeptides including Pro-Leu-GlyNH2, Pro-Leu-Gly, Pro-Phe-Gly-Lys, Pro-Pro-Ala-OBut and Pro-Pro-Gly-(Pro-Pro-Gly)(4). Higher activity toward small peptides (up to three residues), but very low activity for longer peptides. Has no activity against p-nitrophenyl acetate, poly_L-proline, Met-Pro or amino acyl amides other than Pro-betaNA (Pyr-betaNA, Phe-betaNA, Cys-betaNA, Met-betaNA, Leu-betaNA, Ala-betaNA and Z-Gly-Pro-betaNA). The sequence is that of Proline iminopeptidase (pip) from Heyndrickxia coagulans (Weizmannia coagulans).